Consider the following 285-residue polypeptide: Complex I assembly factor TIMMDC1, mitochondrial (285 aa).

4 consecutive transmembrane segments (helical) span residues 80-100 (AALS…FIYA), 137-159 (RWSW…LTVY), 165-185 (LSHF…NLGL), and 188-208 (LVAG…LLMA).

Belongs to the Tim17/Tim22/Tim23 family. In terms of assembly, associates with the intermediate 315 kDa subcomplex of incompletely assembled complex I. Interacts with TMEM70.

The protein localises to the mitochondrion membrane. Its function is as follows. Chaperone protein involved in the assembly of the mitochondrial NADH:ubiquinone oxidoreductase complex (complex I). Participates in constructing the membrane arm of complex I. The chain is Complex I assembly factor TIMMDC1, mitochondrial from Rattus norvegicus (Rat).